The chain runs to 575 residues: Acetolactate synthase large subunit (575 aa).

Glutamate 57 is a binding site for thiamine diphosphate. FAD is bound by residues arginine 159, 265–286, and 308–327; these read HGSYAANMALVEADYIINLGSR and DIDAAELGKIVKTDIPILSD. The interval 395–475 is thiamine pyrophosphate binding; the sequence is QHQMWVAQYY…IKVVLINNHS (81 aa). Aspartate 446 and asparagine 473 together coordinate Mg(2+).

It belongs to the TPP enzyme family. Dimer of large and small chains. Requires Mg(2+) as cofactor. Thiamine diphosphate is required as a cofactor.

It catalyses the reaction 2 pyruvate + H(+) = (2S)-2-acetolactate + CO2. Its pathway is amino-acid biosynthesis; L-isoleucine biosynthesis; L-isoleucine from 2-oxobutanoate: step 1/4. It functions in the pathway amino-acid biosynthesis; L-valine biosynthesis; L-valine from pyruvate: step 1/4. This Lactococcus lactis subsp. lactis (strain IL1403) (Streptococcus lactis) protein is Acetolactate synthase large subunit (ilvB).